Consider the following 355-residue polypeptide: Uroporphyrinogen decarboxylase (355 aa).

Substrate contacts are provided by residues 27–31, D78, Y155, T210, and H328; that span reads RQAGR.

Belongs to the uroporphyrinogen decarboxylase family. As to quaternary structure, homodimer.

It localises to the cytoplasm. The catalysed reaction is uroporphyrinogen III + 4 H(+) = coproporphyrinogen III + 4 CO2. Its pathway is porphyrin-containing compound metabolism; protoporphyrin-IX biosynthesis; coproporphyrinogen-III from 5-aminolevulinate: step 4/4. Catalyzes the decarboxylation of four acetate groups of uroporphyrinogen-III to yield coproporphyrinogen-III. The protein is Uroporphyrinogen decarboxylase of Pseudomonas fluorescens (strain Pf0-1).